The sequence spans 100 residues: MTPWYLYLIRTADNALYTGITTDVARRYKQHQSGKGAKALRGKGELTLAFSAQVGERSLALRMEYRIKRLTKRQKERLVTEGEGFEALLASLQTPTLKSD.

The region spanning 2 to 77 (TPWYLYLIRT…KRLTKRQKER (76 aa)) is the GIY-YIG domain.

Belongs to the UPF0213 family.

The polypeptide is UPF0213 protein CKO_04549 (Citrobacter koseri (strain ATCC BAA-895 / CDC 4225-83 / SGSC4696)).